We begin with the raw amino-acid sequence, 47 residues long: Alpha-conotoxin VxXXC (47 aa).

3 positions are modified to hydroxyproline; partial: Pro-10, Pro-21, and Pro-29. Intrachain disulfides connect Cys-18–Cys-27, Cys-23–Cys-35, Cys-28–Cys-45, and Cys-33–Cys-47.

Homodimer. Pseudo-homodimer (identical sequence, different post-translational modifications). HydroxyPro-10 is only found in a minor form. In terms of tissue distribution, expressed by the venom duct.

The protein localises to the secreted. Its function is as follows. Alpha-conotoxins act on postsynaptic membranes, they bind to the nicotinic acetylcholine receptors (nAChR) and thus inhibit them. Through its two C-terminal domains, this homodimeric protein would bind to two nAChR allosteric sites, located outside the nAChR C-loop of the principal binding face and at the adjacent binding interface in a clockwise direction. This toxin specifically blocks mammalian neuronal nAChR of the alpha-7/CHRNA7, alpha-3-beta-2/CHRNA3-CHRNB2 and alpha-4-beta-2/CHRNA4-CHRNB2 subtypes. VxXXA and VxXXB inhibit alpha-7/CHRNA7 and alpha-3-beta-2/CHRNA3-CHRNB2 nAChR more efficiently than VxXXC. VxXXB is the most effective at inhibiting alpha-4-beta-2/CHRNA4-CHRNB2 nAChR, followed by VxXXC and VxXXA. The protein is Alpha-conotoxin VxXXC of Conus vexillum (Flag cone).